Consider the following 706-residue polypeptide: DNA ligase (706 aa).

The disordered stretch occupies residues 1–20; that stretch reads MSATAGTADESGVASAAASA. NAD(+) is bound by residues 50–54, 99–100, and Glu128; these read DAEYD and SL. Residue Lys130 is the N6-AMP-lysine intermediate of the active site. NAD(+) is bound by residues Arg151, Glu188, Lys304, and Lys328. Zn(2+) contacts are provided by Cys422, Cys425, Cys440, and Cys446. In terms of domain architecture, BRCT spans 604–694; that stretch reads EGPRPLDGVT…VDAASKLAVP (91 aa).

The protein belongs to the NAD-dependent DNA ligase family. LigA subfamily. It depends on Mg(2+) as a cofactor. Mn(2+) is required as a cofactor.

The catalysed reaction is NAD(+) + (deoxyribonucleotide)n-3'-hydroxyl + 5'-phospho-(deoxyribonucleotide)m = (deoxyribonucleotide)n+m + AMP + beta-nicotinamide D-nucleotide.. In terms of biological role, DNA ligase that catalyzes the formation of phosphodiester linkages between 5'-phosphoryl and 3'-hydroxyl groups in double-stranded DNA using NAD as a coenzyme and as the energy source for the reaction. It is essential for DNA replication and repair of damaged DNA. The sequence is that of DNA ligase from Frankia casuarinae (strain DSM 45818 / CECT 9043 / HFP020203 / CcI3).